Here is a 419-residue protein sequence, read N- to C-terminus: Inner ear-specific collagen (419 aa).

An N-terminal signal peptide occupies residues 1–19 (MDAYSLSPTDSTTYSSDTF). Residues 20-57 (STEFHTDAIAPPGNTPGNYTLDYNECFFNFCECCPPEK) are nonhelical region (NC2). Asparagine 37 carries N-linked (GlcNAc...) asparagine glycosylation. Residues 58–274 (GPMGPMGERG…RGPKGPPGES (217 aa)) form a triple-helical region (COL1) region. Residues 63 to 275 (MGERGLPGPP…GPKGPPGESV (213 aa)) are disordered. 2 stretches are compositionally biased toward basic and acidic residues: residues 129–144 (PGEK…KGER) and 184–202 (LKGE…KGER). Gly residues predominate over residues 227-236 (GPLGGKGDTG). One can recognise a C1q domain in the interval 275 to 412 (VEQIRSAFSV…GFLLYPDTKK (138 aa)). The interval 275 to 419 (VEQIRSAFSV…TKKPTAMENL (145 aa)) is nonhelical region (NC1). Asparagine 320 is a glycosylation site (N-linked (GlcNAc...) asparagine).

Specialized secretory supporting cells at the outer perimeter of the saccular epithelium.

It localises to the secreted. Its subcellular location is the extracellular space. The protein resides in the extracellular matrix. Its function is as follows. Forms a microstructural matrix within the otolithic membrane. The sequence is that of Inner ear-specific collagen from Lepomis macrochirus (Bluegill).